The following is a 194-amino-acid chain: MKLYKDLIGNSHDDLLTDRYEIKVGDVTFEVKTKMITKDLNVVVNNNSLGGSISTTVDNNNSITLSTNLEDEFENVEAAGTFQINNLVEQLRLVETSFDKKSYLAYMKLYIKDLINHIKQQPSNSDNEKIEHIQKGIQSFVKTMMDGENFKKYSFFTGSSMDANGLVALMYYKDDDPTTPTFVFIKYGLLQVDV.

In terms of domain architecture, TCTP spans 1–194 (MKLYKDLIGN…IKYGLLQVDV (194 aa)).

This sequence belongs to the TCTP family.

It localises to the cytoplasm. Its function is as follows. Involved in calcium binding and microtubule stabilization. This chain is Translationally-controlled tumor protein homolog 2, found in Dictyostelium discoideum (Social amoeba).